A 200-amino-acid polypeptide reads, in one-letter code: 3-isopropylmalate dehydratase small subunit (200 aa).

It belongs to the LeuD family. LeuD type 1 subfamily. In terms of assembly, heterodimer of LeuC and LeuD.

The enzyme catalyses (2R,3S)-3-isopropylmalate = (2S)-2-isopropylmalate. Its pathway is amino-acid biosynthesis; L-leucine biosynthesis; L-leucine from 3-methyl-2-oxobutanoate: step 2/4. Its function is as follows. Catalyzes the isomerization between 2-isopropylmalate and 3-isopropylmalate, via the formation of 2-isopropylmaleate. The protein is 3-isopropylmalate dehydratase small subunit of Campylobacter jejuni subsp. jejuni serotype O:6 (strain 81116 / NCTC 11828).